We begin with the raw amino-acid sequence, 537 residues long: Cytoplasmic dynein 2 intermediate chain 2 (537 aa).

Residue Ser-15 is modified to Phosphoserine. The segment at 80–93 is DYNLL2 binding; the sequence is RTHADAQVQTEAPE. Residues 107-132 are DYNLRB1 binding; sequence LRLEAFLRRVEAMVIRELNNNWQSHA. 5 WD repeats span residues 216–256, 265–309, 391–431, 434–474, and 481–521; these read EVPS…DPLL, THTD…QLRL, PHGG…PLTS, LSHK…QKPT, and QDGS…TEQG.

It belongs to the dynein light intermediate chain family. The cytoplasmic dynein 2 complex consists of two catalytic heavy chains (HCs) and a number of non-catalytic subunits presented by intermediate chains (ICs), light intermediate chains (LICs) and light chains (LCs). Among them, a heavy chain (DYNC2H1), two intermediate chains (DYNC2I2 and DYNC2I1), a light intermediate chain (DYNC2LI1), and a light chain (DYNLT2B) are unique to the cytoplasmic dynein complex 2, but a subset of the light chains are also shared by dynein-1 and dynein-2 complexes. Interacts with DYNC2I1; their C-terminal domains each bind a copy of the heavy chain, and their extended N-terminal regions are held together by an array of light chain dimers. Interacts with DYNLL2; this interaction is essential for dynein-2-mediated retrograde trafficking of ciliary proteins. Interacts with DYNLRB1; this interaction is essential for dynein-2-mediated retrograde trafficking of ciliary proteins. Interacts (via the WD domains) with MAP3K7 and TAB3. Interacts (via WD domains) with TAB2 (via C-terminus). Interacts (via WD domains) with TRAF6 (via TRAF-type domains). As to expression, expressed in brain, thymus, heart, lung, liver, spleen, kidney, testis and intestine.

It is found in the cytoplasm. The protein localises to the cytoskeleton. The protein resides in the cilium basal body. Its subcellular location is the cilium axoneme. It localises to the cell projection. It is found in the cilium. The protein localises to the microtubule organizing center. The protein resides in the centrosome. Its subcellular location is the filopodium. In terms of biological role, acts as one of several non-catalytic accessory components of the cytoplasmic dynein 2 complex (dynein-2 complex), a motor protein complex that drives the movement of cargos along microtubules within cilia and flagella in concert with the intraflagellar transport (IFT) system. DYNC2I2 plays a major role in retrograde ciliary protein trafficking and in ciliogenesis. Required also to maintain a functional transition zone. Functionally, acts as a negative regulator of the Toll-like and IL-1R receptor signaling pathways. Inhibits the MAP3K7-induced NF-kappa-B activation pathway. Inhibits MAP3K7 phosphorylation at 'Thr-184' and 'Thr-187' upon Il-1 beta stimulation. The protein is Cytoplasmic dynein 2 intermediate chain 2 (Dync2i2) of Mus musculus (Mouse).